We begin with the raw amino-acid sequence, 332 residues long: Apoptosis-enhancing nuclease (332 aa).

The tract at residues 1–102 is disordered; sequence MVPREVPESS…VPREAPSSGP (102 aa). Residues 20 to 36 show a composition bias toward basic residues; the sequence is ARRRHKRRSRQHQRFMA. The Nucleolar localization signal signature appears at 21-29; that stretch reads RRRHKRRSR. Polar residues predominate over residues 63 to 73; it reads QTPAGTEASGN. Positions 105 to 261 constitute an Exonuclease domain; sequence YVAIDCEMVG…EDAMTAMELY (157 aa). The Nuclear localization signal motif lies at 160 to 183; sequence RQHMHKAIPFQVAQKEILKLLKGK. The tract at residues 272 to 332 is disordered; sequence VASTAKAHPE…EGQGARSAPP (61 aa). The span at 310 to 321 shows a compositional bias: basic and acidic residues; sequence GDTREAQDRQEG.

The protein localises to the nucleus. Its subcellular location is the nucleolus. Functionally, exonuclease with activity against single- and double-stranded DNA and RNA. Mediates p53-induced apoptosis. When induced by p53 following DNA damage, digests double-stranded DNA to form single-stranded DNA and amplifies DNA damage signals, leading to enhancement of apoptosis. This chain is Apoptosis-enhancing nuclease, found in Rattus norvegicus (Rat).